A 131-amino-acid polypeptide reads, in one-letter code: Ribosome-binding factor A (131 aa).

The protein belongs to the RbfA family. As to quaternary structure, monomer. Binds 30S ribosomal subunits, but not 50S ribosomal subunits or 70S ribosomes.

The protein resides in the cytoplasm. Its function is as follows. One of several proteins that assist in the late maturation steps of the functional core of the 30S ribosomal subunit. Associates with free 30S ribosomal subunits (but not with 30S subunits that are part of 70S ribosomes or polysomes). Required for efficient processing of 16S rRNA. May interact with the 5'-terminal helix region of 16S rRNA. This chain is Ribosome-binding factor A, found in Thermotoga petrophila (strain ATCC BAA-488 / DSM 13995 / JCM 10881 / RKU-1).